We begin with the raw amino-acid sequence, 426 residues long: Glutamate-1-semialdehyde 2,1-aminomutase (426 aa).

N6-(pyridoxal phosphate)lysine is present on Lys-265.

The protein belongs to the class-III pyridoxal-phosphate-dependent aminotransferase family. HemL subfamily. In terms of assembly, homodimer. Pyridoxal 5'-phosphate is required as a cofactor.

It is found in the cytoplasm. It catalyses the reaction (S)-4-amino-5-oxopentanoate = 5-aminolevulinate. The protein operates within porphyrin-containing compound metabolism; protoporphyrin-IX biosynthesis; 5-aminolevulinate from L-glutamyl-tRNA(Glu): step 2/2. This is Glutamate-1-semialdehyde 2,1-aminomutase from Cronobacter sakazakii (strain ATCC BAA-894) (Enterobacter sakazakii).